A 568-amino-acid chain; its full sequence is PTS system lactose-specific EIICB component (568 aa).

One can recognise a PTS EIIC type-3 domain in the interval Ile8–Phe409. Transmembrane regions (helical) follow at residues Gly30 to Val50, Met65 to Thr85, Ile103 to Pro123, Gly128 to Ile148, Phe183 to Val203, Gly222 to His242, Ile246 to Ile266, Phe283 to Leu303, Val339 to Val359, and Ile381 to Val401. Residues Glu465–Asp568 form the PTS EIIB type-3 domain. Residue Cys472 is the Phosphocysteine intermediate; for EIIB activity of the active site. Cys472 is subject to Phosphocysteine; by EIIA.

The protein resides in the cell membrane. The enzyme catalyses lactose(out) + N(pros)-phospho-L-histidyl-[protein] = lactose 6-phosphate(in) + L-histidyl-[protein]. The phosphoenolpyruvate-dependent sugar phosphotransferase system (sugar PTS), a major carbohydrate active transport system, catalyzes the phosphorylation of incoming sugar substrates concomitantly with their translocation across the cell membrane. The enzyme II LacEF PTS system is involved in lactose transport. The polypeptide is PTS system lactose-specific EIICB component (Streptococcus mutans serotype c (strain ATCC 700610 / UA159)).